The primary structure comprises 584 residues: MKYRTHRCNELSLSNVGERVRVSGWVHRYRNHGGVVFIDLRDRFGITQIVCREDEKPELHQLVDSVRSEWVLSVEGTVCRRLEGMENANLATGDIEVEIEKVDILSKAKNLPFSISDDHIHVNEELRLEYRYLDMRRGQILDRLIYRHKVMLACRQYMDKQGFTEVVTPVLGKSTPEGARDYLVPSRIYPGSFYALPQSPQLFKQILMVGGLDRYFQIATCFRDEDLRADRQPEFAQIDIEMSFATPDDLFPIIEQLVVEMFSVQGIKIDLPLPRMTYQEAKDLYGTDKPDLRFGLQLRDCREHAKQFSFSIFLDQLAQGGTIKGFCVPGGADMSRKQLDVYTEFVKRYGAMGLVWIKKQENGLASNVAKFASEEVFDAMFADFSAKDNDILLLIAAPESIANQSLDHLRRLIGKERNLYNESQYNFVWITDFPLFAKEEGKICSEHHPFTSPLDEDISLLDTDPLSVRSSSYDLVLNGYEIASGSQRIHNADLQNKIFSILELSPESIKEKFGFFIDALSFGTPPHLGIALGLDRIMMVLTGAEGIREVIAFPKTQKAADLMMNAPAEIMTSQLKELNIKVTS.

An L-aspartate-binding site is contributed by glutamate 177. Residues 201-204 form an aspartate region; the sequence is QLFK. An L-aspartate-binding site is contributed by arginine 223. ATP contacts are provided by residues 223 to 225 and glutamine 232; that span reads RDE. Histidine 447 lines the L-aspartate pocket. Glutamate 481 contacts ATP. Arginine 488 serves as a coordination point for L-aspartate. 533 to 536 contacts ATP; the sequence is GLDR.

The protein belongs to the class-II aminoacyl-tRNA synthetase family. Type 1 subfamily. Homodimer.

The protein resides in the cytoplasm. It catalyses the reaction tRNA(Asx) + L-aspartate + ATP = L-aspartyl-tRNA(Asx) + AMP + diphosphate. Functionally, aspartyl-tRNA synthetase with relaxed tRNA specificity since it is able to aspartylate not only its cognate tRNA(Asp) but also tRNA(Asn). Reaction proceeds in two steps: L-aspartate is first activated by ATP to form Asp-AMP and then transferred to the acceptor end of tRNA(Asp/Asn). This is Aspartate--tRNA(Asp/Asn) ligase from Chlamydia caviae (strain ATCC VR-813 / DSM 19441 / 03DC25 / GPIC) (Chlamydophila caviae).